The chain runs to 104 residues: ATP-dependent Clp protease adapter protein ClpS (104 aa).

This sequence belongs to the ClpS family. In terms of assembly, binds to the N-terminal domain of the chaperone ClpA.

In terms of biological role, involved in the modulation of the specificity of the ClpAP-mediated ATP-dependent protein degradation. This Paraburkholderia phymatum (strain DSM 17167 / CIP 108236 / LMG 21445 / STM815) (Burkholderia phymatum) protein is ATP-dependent Clp protease adapter protein ClpS.